The sequence spans 227 residues: Ribosomal RNA large subunit methyltransferase E (227 aa).

S-adenosyl-L-methionine-binding residues include G78, W80, D103, D119, and D143. The active-site Proton acceptor is the K183.

The protein belongs to the class I-like SAM-binding methyltransferase superfamily. RNA methyltransferase RlmE family.

The protein resides in the cytoplasm. It carries out the reaction uridine(2552) in 23S rRNA + S-adenosyl-L-methionine = 2'-O-methyluridine(2552) in 23S rRNA + S-adenosyl-L-homocysteine + H(+). Functionally, specifically methylates the uridine in position 2552 of 23S rRNA at the 2'-O position of the ribose in the fully assembled 50S ribosomal subunit. This is Ribosomal RNA large subunit methyltransferase E from Rickettsia africae (strain ESF-5).